Here is a 187-residue protein sequence, read N- to C-terminus: MAIAESFQLSDGYSVYAGVRARRDGVVEDAAFALAKIGGTDGTSAASKILEALLRRDVSLVMLDGCIVSFYNWVDGEALYAKFKKPVACYVFEEPEGRVEEAVRKLFTDWEVRIEAIKKLGPPTVYYTKSGYKIYIRAWGIDPVDAGRAAEYCTGFGKIPEPLRVAKIIAGAARQFLKTLGKFRFLW.

It belongs to the UPF0215 family.

This Pyrobaculum aerophilum (strain ATCC 51768 / DSM 7523 / JCM 9630 / CIP 104966 / NBRC 100827 / IM2) protein is UPF0215 protein PAE0952.